The chain runs to 689 residues: Glycine--tRNA ligase beta subunit (689 aa).

This sequence belongs to the class-II aminoacyl-tRNA synthetase family. Tetramer of two alpha and two beta subunits.

The protein resides in the cytoplasm. The enzyme catalyses tRNA(Gly) + glycine + ATP = glycyl-tRNA(Gly) + AMP + diphosphate. This is Glycine--tRNA ligase beta subunit from Escherichia coli O8 (strain IAI1).